We begin with the raw amino-acid sequence, 934 residues long: Protocadherin gamma-C3 (934 aa).

A signal peptide spans 1-31; it reads MVPEAWRSGLVSTGRVVGVLLLLGALNKAST. Cadherin domains are found at residues 32–135, 136–244, 245–352, 353–457, 458–567, and 572–685; these read VIHY…NPAF, PTQE…APVF, NQSL…APEI, TVTS…PPQS, SQSS…APQV, and PGGS…APRE. Residues 32 to 693 are Extracellular-facing; the sequence is VIHYEIPEER…REQKKNLTFY (662 aa). N-linked (GlcNAc...) asparagine glycosylation is found at Asn-245, Asn-424, Asn-478, Asn-550, Asn-615, and Asn-689. A helical transmembrane segment spans residues 694-714; it reads LLLSLILVSVGFVVTVFGVII. Residues 715 to 934 lie on the Cytoplasmic side of the membrane; the sequence is FKVYKWKQSR…KKKSGKKEKK (220 aa). Disordered stretches follow at residues 804–843 and 904–934; these read ESAPPGQQAPPNTDWRFSQAQRPGTSGSQNGDDTGTWPNN and ATLTNAAGKRDGKAPAGGNGNKKKSGKKEKK. Positions 812–843 are enriched in polar residues; it reads APPNTDWRFSQAQRPGTSGSQNGDDTGTWPNN. Basic residues predominate over residues 924–934; that stretch reads NKKKSGKKEKK.

The protein localises to the cell membrane. Functionally, potential calcium-dependent cell-adhesion protein. May be involved in the establishment and maintenance of specific neuronal connections in the brain. In Homo sapiens (Human), this protein is Protocadherin gamma-C3 (PCDHGC3).